Consider the following 111-residue polypeptide: Probable 4-amino-4-deoxy-L-arabinose-phosphoundecaprenol flippase subunit ArnE (111 aa).

3 consecutive transmembrane segments (helical) span residues 38-58 (LWLG…LLVL), 61-81 (LPVG…TLAA), and 89-109 (VLPR…ILGS). One can recognise an EamA domain in the interval 40-109 (LGLALICMGA…IISGIIILGS (70 aa)).

The protein belongs to the ArnE family. Heterodimer of ArnE and ArnF.

It is found in the cell inner membrane. The protein operates within bacterial outer membrane biogenesis; lipopolysaccharide biosynthesis. Functionally, translocates 4-amino-4-deoxy-L-arabinose-phosphoundecaprenol (alpha-L-Ara4N-phosphoundecaprenol) from the cytoplasmic to the periplasmic side of the inner membrane. This is Probable 4-amino-4-deoxy-L-arabinose-phosphoundecaprenol flippase subunit ArnE from Salmonella paratyphi A (strain ATCC 9150 / SARB42).